The following is a 30-amino-acid chain: Uperin-6.1 (30 aa).

In terms of tissue distribution, expressed by the skin dorsal glands.

The protein resides in the secreted. The polypeptide is Uperin-6.1 (Uperoleia inundata (Floodplain toadlet)).